Consider the following 231-residue polypeptide: Large ribosomal subunit protein uL1 (231 aa).

Belongs to the universal ribosomal protein uL1 family. In terms of assembly, part of the 50S ribosomal subunit.

Its function is as follows. Binds directly to 23S rRNA. The L1 stalk is quite mobile in the ribosome, and is involved in E site tRNA release. Functionally, protein L1 is also a translational repressor protein, it controls the translation of the L11 operon by binding to its mRNA. The polypeptide is Large ribosomal subunit protein uL1 (Beijerinckia indica subsp. indica (strain ATCC 9039 / DSM 1715 / NCIMB 8712)).